Consider the following 824-residue polypeptide: Frameshifted structural polyprotein (824 aa).

The span at 1-10 (MEFIPTQTFY) shows a compositional bias: polar residues. A disordered region spans residues 1 to 104 (MEFIPTQTFY…KKKKPGRRER (104 aa)). Positions 22–44 (RPTIQVIRPRPRPQRQAGQLAQL) are enriched in low complexity. The tract at residues 36–68 (RQAGQLAQLISAVNKLTMRAVPQQKPRKNRKNK) is host transcription inhibition. Residues 60 to 72 (KPRKNRKNKKQKQ) are compositionally biased toward basic residues. A Nuclear localization signal motif is present at residues 61 to 99 (PRKNRKNKKQKQKQQAPQNNTNQKKQPPKKKPAQKKKKP). Positions 73-85 (KQQAPQNNTNQKK) are enriched in low complexity. The segment at 84-114 (KKQPPKKKPAQKKKKPGRRERMCMKIENDCI) is binding to the viral RNA. The segment covering 86–101 (QPPKKKPAQKKKKPGR) has biased composition (basic residues). Ribosome-binding regions lie at residues 91 to 100 (KPAQKKKKPG) and 99 to 113 (PGRR…ENDC). Residues cysteine 113 and cysteine 128 are joined by a disulfide bond. The 149-residue stretch at 113-261 (CIFEVKHEGK…KITPEGAEEW (149 aa)) folds into the Peptidase S3 domain. Histidine 139 (charge relay system) is an active-site residue. The Nuclear export signal signature appears at 144–154 (IDNADLAKLAF). Aspartate 161 functions as the Charge relay system in the catalytic mechanism. Residues 183–193 (PEGYYNWHHGA) are dimerization of the capsid protein. Serine 213 acts as the Charge relay system in catalysis. A dimerization of the capsid protein region spans residues 219–223 (DNKGR). Residues 262 to 274 (SLAIPVMCLLANT) are functions as an uncleaved signal peptide for the precursor of protein E3/E2. Residues 262–692 (SLAIPVMCLL…YYYELYPTMT (431 aa)) lie on the Extracellular side of the membrane. N-linked (GlcNAc...) asparagine; by host glycans are attached at residues asparagine 273, asparagine 588, and asparagine 670. The chain crosses the membrane as a helical span at residues 693-713 (VVVVSVASFILLSMVGMAVGM). At 714–748 (CMCARRRCITPYELTPGATVPFLLSLICCIRTAKA) the chain is on the cytoplasmic side. S-palmitoyl cysteine; by host attachment occurs at residues cysteine 721, cysteine 741, and cysteine 742. The interval 721–741 (CITPYELTPGATVPFLLSLIC) is transient transmembrane before p62-6K protein processing. Residues 749-763 (ATYQEAAVYLWNEQQ) lie on the Extracellular side of the membrane. The chain crosses the membrane as a helical span at residues 764-784 (PLFWLQALIPLAALIVLCNCL). At 785 to 795 (RLLPCCCKTLA) the chain is on the cytoplasmic side.

Belongs to the alphavirus frameshifted structural polyprotein family. In terms of assembly, homodimer. Homomultimer. Interacts with host karyopherin KPNA4; this interaction allows the nuclear import of the viral capsid protein. Interacts with spike glycoprotein E2. Interacts with host IRAK1; the interaction leads to inhibition of IRAK1-dependent signaling. As to quaternary structure, the precursor of protein E3/E2 and E1 form a heterodimer shortly after synthesis. Processing of the precursor of protein E3/E2 into E2 and E3 results in a heterodimer of the spike glycoproteins E2 and E1. Spike at virion surface are constituted of three E2-E1 heterodimers. Interacts with 6K protein. Interacts with host MXRA8; this interaction mediates virus entry. In terms of processing, specific enzymatic cleavages in vivo yield mature proteins. Capsid protein is auto-cleaved during polyprotein translation, unmasking a signal peptide at the N-terminus of the precursor of E3/E2. The remaining polyprotein is then targeted to the host endoplasmic reticulum, where host signal peptidase cleaves it into pE2 and TF. pE2 is further processed to mature E3 and E2 by host furin in trans-Golgi vesicle. Palmitoylated via thioester bonds. These palmitoylations may induce disruption of the C-terminus transmembrane. This would result in the reorientation of E2 C-terminus from lumenal to cytoplasmic side. Post-translationally, palmitoylated via thioester bonds.

The protein localises to the virion. It localises to the host cytoplasm. It is found in the host cell membrane. The protein resides in the host nucleus. Its subcellular location is the virion membrane. The catalysed reaction is Autocatalytic release of the core protein from the N-terminus of the togavirus structural polyprotein by hydrolysis of a -Trp-|-Ser- bond.. In terms of biological role, forms an icosahedral capsid with a T=4 symmetry composed of 240 copies of the capsid protein surrounded by a lipid membrane through which penetrate 80 spikes composed of trimers of E1-E2 heterodimers. The capsid protein binds to the viral RNA genome at a site adjacent to a ribosome binding site for viral genome translation following genome release. Possesses a protease activity that results in its autocatalytic cleavage from the nascent structural protein. Following its self-cleavage, the capsid protein transiently associates with ribosomes, and within several minutes the protein binds to viral RNA and rapidly assembles into icosahedric core particles. The resulting nucleocapsid eventually associates with the cytoplasmic domain of the spike glycoprotein E2 at the cell membrane, leading to budding and formation of mature virions. In case of infection, new virions attach to target cells and after clathrin-mediated endocytosis their membrane fuses with the host endosomal membrane. This leads to the release of the nucleocapsid into the cytoplasm, followed by an uncoating event necessary for the genomic RNA to become accessible. The uncoating might be triggered by the interaction of capsid proteins with ribosomes. Binding of ribosomes would release the genomic RNA since the same region is genomic RNA-binding and ribosome-binding. Specifically inhibits interleukin-1 receptor-associated kinase 1/IRAK1-dependent signaling during viral entry, representing a means by which the alphaviruses may evade innate immune detection and activation prior to viral gene expression. Its function is as follows. Provides the signal sequence for the translocation of the precursor of protein E3/E2 to the host endoplasmic reticulum. Furin-cleaved E3 remains associated with spike glycoprotein E1 and mediates pH protection of the latter during the transport via the secretory pathway. After virion release from the host cell, the assembly protein E3 is gradually released in the extracellular space. Plays a role in viral attachment to target host cell, by binding to the cell receptor. Synthesized as a p62 precursor which is processed by furin at the cell membrane just before virion budding, giving rise to E2-E1 heterodimer. The p62-E1 heterodimer is stable, whereas E2-E1 is unstable and dissociate at low pH. p62 is processed at the last step, presumably to avoid E1 fusion activation before its final export to cell surface. E2 C-terminus contains a transitory transmembrane that would be disrupted by palmitoylation, resulting in reorientation of the C-terminal tail from lumenal to cytoplasmic side. This step is critical since E2 C-terminus is involved in budding by interacting with capsid proteins. This release of E2 C-terminus in cytoplasm occurs lately in protein export, and precludes premature assembly of particles at the endoplasmic reticulum membrane. Functionally, plays a role in viral assembly and release. The sequence is that of Frameshifted structural polyprotein from Aedes aegypti (Yellowfever mosquito).